The chain runs to 392 residues: Formate-dependent phosphoribosylglycinamide formyltransferase (392 aa).

N(1)-(5-phospho-beta-D-ribosyl)glycinamide is bound by residues 22 to 23 and Glu82; that span reads EL. ATP is bound by residues Arg114, Lys155, 160–165, 195–198, and Glu203; these read SSGKGQ and EGVV. Residues 119–308 enclose the ATP-grasp domain; that stretch reads RLAAEELQLP…EFALHVRAFL (190 aa). 2 residues coordinate Mg(2+): Glu267 and Glu279. N(1)-(5-phospho-beta-D-ribosyl)glycinamide is bound by residues Asp286, Lys355, and 362-363; that span reads RR.

The protein belongs to the PurK/PurT family. Homodimer.

The catalysed reaction is N(1)-(5-phospho-beta-D-ribosyl)glycinamide + formate + ATP = N(2)-formyl-N(1)-(5-phospho-beta-D-ribosyl)glycinamide + ADP + phosphate + H(+). It participates in purine metabolism; IMP biosynthesis via de novo pathway; N(2)-formyl-N(1)-(5-phospho-D-ribosyl)glycinamide from N(1)-(5-phospho-D-ribosyl)glycinamide (formate route): step 1/1. In terms of biological role, involved in the de novo purine biosynthesis. Catalyzes the transfer of formate to 5-phospho-ribosyl-glycinamide (GAR), producing 5-phospho-ribosyl-N-formylglycinamide (FGAR). Formate is provided by PurU via hydrolysis of 10-formyl-tetrahydrofolate. In Shigella boydii serotype 18 (strain CDC 3083-94 / BS512), this protein is Formate-dependent phosphoribosylglycinamide formyltransferase.